The primary structure comprises 613 residues: V-type proton ATPase catalytic subunit A isoform 1 (613 aa).

240–247 (GAFGCGKT) contacts ATP.

The protein belongs to the ATPase alpha/beta chains family. V-ATPase is a heteromultimeric enzyme composed of a peripheral catalytic V1 complex (main components: subunits A, B, C, D, E, and F) attached to an integral membrane V0 proton pore complex (main component: the proteolipid protein).

It catalyses the reaction ATP + H2O + 4 H(+)(in) = ADP + phosphate + 5 H(+)(out). Catalytic subunit of the peripheral V1 complex of vacuolar ATPase. V-ATPase vacuolar ATPase is responsible for acidifying a variety of intracellular compartments in eukaryotic cells. This is V-type proton ATPase catalytic subunit A isoform 1 from Acetabularia acetabulum (Mermaid's wine glass).